The sequence spans 98 residues: Protein S100-A13 (98 aa).

In terms of domain architecture, EF-hand spans 18 to 53; sequence TTFFTFARQEGRKDSLSVNEFKELVTQQLPHLLKDV. 7 residues coordinate Ca(2+): Ser-32, Glu-37, Asp-64, Asn-66, Asp-68, Glu-70, and Glu-75. Residue Ser-32 is modified to Phosphoserine.

This sequence belongs to the S-100 family. In terms of assembly, homodimer. Part of a copper-dependent multiprotein complex containing S100A13, FGF1 and SYT1. Interacts with FGF1 and SYT1. Interacts with IL1A. As to expression, expressed in heart and skeletal muscle.

It localises to the cytoplasm. The protein localises to the secreted. Its function is as follows. Plays a role in the export of proteins that lack a signal peptide and are secreted by an alternative pathway. Binds two calcium ions per subunit. Binds one copper ion. Binding of one copper ion does not interfere with calcium binding. Required for the copper-dependent stress-induced export of IL1A and FGF1. The calcium-free protein binds to lipid vesicles containing phosphatidylserine, but not to vesicles containing phosphatidylcholine. In Homo sapiens (Human), this protein is Protein S100-A13 (S100A13).